The chain runs to 256 residues: Ferritin-3, chloroplastic (256 aa).

The transit peptide at 1–54 directs the protein to the chloroplast; the sequence is MALSCSKVLTFSLSSVVGGDDAKKKLSLCSSSSLSASVNGGGSRNMRVCAAASN. Positions 55–87 are extension peptide (EP); the sequence is APAPLTGVIFEPFQELKKDYLAVPIAPNVSLSR. The Ferritin-like diiron domain maps to 88–241; the sequence is QNYSDEAEAA…EYVTQLRLVG (154 aa). The Fe cation site is built by Glu-105, Glu-140, His-143, Glu-189, and Gln-223.

Belongs to the ferritin family. In terms of assembly, oligomer of 24 subunits. There are two types of subunits: L (light) chain and H (heavy) chain. The major chain can be light or heavy, depending on the species and tissue type. The functional molecule forms a roughly spherical shell with a diameter of 12 nm and contains a central cavity into which the insoluble mineral iron core is deposited.

The protein resides in the plastid. It localises to the chloroplast. It catalyses the reaction 4 Fe(2+) + O2 + 4 H(+) = 4 Fe(3+) + 2 H2O. In terms of biological role, stores iron in a soluble, non-toxic, readily available form. Important for iron homeostasis. Has ferroxidase activity. Iron is taken up in the ferrous form and deposited as ferric hydroxides after oxidation. In Vigna unguiculata (Cowpea), this protein is Ferritin-3, chloroplastic.